Here is a 412-residue protein sequence, read N- to C-terminus: Acyl-[acyl-carrier-protein] hydrolase FATB3, chloroplastic (412 aa).

Positions 1 to 25 are enriched in low complexity; sequence MVAAAASSAFFSFPTPGTSPKPGKF. The N-terminal 50 residues, 1 to 50, are a transit peptide targeting the chloroplast; that stretch reads MVAAAASSAFFSFPTPGTSPKPGKFGNWPSSLSIPFNPKSNHNGGIQVKA. The interval 1–63 is disordered; that stretch reads MVAAAASSAF…AHPKANGSAV (63 aa). Polar residues predominate over residues 28 to 44; that stretch reads WPSSLSIPFNPKSNHNG. Active-site residues include N310, H312, and C347. Residues 393–412 are disordered; that stretch reads NAGATGAVSTGKTSNGNSVS. The span at 399 to 412 shows a compositional bias: polar residues; that stretch reads AVSTGKTSNGNSVS.

It belongs to the acyl-ACP thioesterase family.

Its subcellular location is the plastid. It is found in the chloroplast. The enzyme catalyses tetradecanoyl-[ACP] + H2O = tetradecanoate + holo-[ACP] + H(+). Its function is as follows. Plays an essential role in chain termination during de novo fatty acid synthesis. Possesses thioesterase activity for medium chain acyl-ACPs. Main substrate is 14:0. The sequence is that of Acyl-[acyl-carrier-protein] hydrolase FATB3, chloroplastic from Cuphea viscosissima (Blue waxweed).